The primary structure comprises 382 residues: Mucosal addressin cell adhesion molecule 1 (382 aa).

The N-terminal stretch at 1–18 (MDFGLALLLAGLLGLLLG) is a signal peptide. Residues 19–317 (QSLQVKPLQV…TGSSKPAGDQ (299 aa)) are Extracellular-facing. Ig-like domains follow at residues 23–112 (VKPL…LLVY) and 113–231 (AFPD…TSPE). 3 cysteine pairs are disulfide-bonded: Cys-47-Cys-94, Cys-51-Cys-98, and Cys-134-Cys-204. Asn-83 carries N-linked (GlcNAc...) asparagine glycosylation. The interval 223 to 314 (VLHSPTSPEP…VIPTGSSKPA (92 aa)) is disordered. Positions 226-317 (SPTSPEPPDT…TGSSKPAGDQ (92 aa)) are mucin-like. The 1; truncated repeat unit spans residues 228–231 (TSPE). A 5.5 X 8 AA tandem repeats of [PS]-P-D-T-T-S-[QP]-E region spans residues 228–271 (TSPEPPDTTSPESPDTTSPESPDTTSQEPPDTTSPEPPDKTSPE). 5 tandem repeats follow at residues 232 to 239 (PPDTTSPE), 240 to 247 (SPDTTSPE), 248 to 255 (SPDTTSQE), 256 to 263 (PPDTTSPE), and 264 to 271 (PPDKTSPE). Low complexity predominate over residues 236 to 261 (TSPESPDTTSPESPDTTSQEPPDTTS). Residues 277-288 (GSTHTPRSPGST) show a composition bias toward low complexity. A helical membrane pass occupies residues 318–338 (LPAALWTSSAVLGLLLLALPT). The Cytoplasmic portion of the chain corresponds to 339 to 382 (YHLWKRCRHLAEDDTHPPASLRLLPQVSAWAGLRGTGQVGISPS).

In terms of assembly, homodimer. Post-translationally, the Ser/Thr-rich mucin-like domain may provide possible sites for O-glycosylation. Highly expressed on high endothelial venules (HEV) and lamina propia venules found in the small intestine, and to a lesser extent in the colon and spleen. Very low levels of expression found in pancreas and brain. Not expressed in the thymus, prostate, ovaries, testis, heart, placenta, lung, liver, skeletal muscle, kidney or peripheral blood leukocytes.

The protein localises to the membrane. Its function is as follows. Cell adhesion leukocyte receptor expressed by mucosal venules, helps to direct lymphocyte traffic into mucosal tissues including the Peyer patches and the intestinal lamina propria. It can bind both integrin alpha-4/beta-7 and L-selectin, regulating both the passage and retention of leukocytes. Isoform 2, lacking the mucin-like domain, may be specialized in supporting integrin alpha-4/beta-7-dependent adhesion strengthening, independent of L-selectin binding. The chain is Mucosal addressin cell adhesion molecule 1 (MADCAM1) from Homo sapiens (Human).